A 721-amino-acid chain; its full sequence is Teichoic acid poly(glycerol phosphate) polymerase (721 aa).

Residues 443–447 (WHGTP), Arg511, 545–546 (PT), 582–584 (RMH), 624–625 (SS), and Asp629 contribute to the CDP-glycerol site.

This sequence belongs to the CDP-glycerol glycerophosphotransferase family.

Its subcellular location is the cell membrane. It carries out the reaction 4-O-[(2R)-glycerylphospho]-N-acetyl-beta-D-mannosaminyl-(1-&gt;4)-N-acetyl-alpha-D-glucosaminyl di-trans,octa-cis-undecaprenyl diphosphate + n CDP-glycerol = 4-O-{[(2R)-1-glycerylphospho](n)-(2R)-1-glycerylphospho}-N-acetyl-beta-D-mannosaminyl-(1-&gt;4)-N-acetyl-alpha-D-glucosaminyl undecaprenyl diphosphate + n CMP + n H(+). It functions in the pathway cell wall biogenesis; poly(glycerol phosphate) teichoic acid biosynthesis. Its function is as follows. Responsible for the polymerization of the main chain of the major teichoic acid by sequential transfer of glycerol phosphate units from CDP-glycerol to the disaccharide linkage unit. Synthesizes polymers of approximately 35 glycerol phosphate units in length. The chain is Teichoic acid poly(glycerol phosphate) polymerase from Staphylococcus epidermidis (strain ATCC 35984 / DSM 28319 / BCRC 17069 / CCUG 31568 / BM 3577 / RP62A).